We begin with the raw amino-acid sequence, 129 residues long: Modulator protein MzrA (129 aa).

Over 1–14 (MINFRGRFGRPLWH) the chain is Cytoplasmic. Residues 15–35 (YLVLPVVLLLLAVILLTPMIV) form a helical membrane-spanning segment. Topologically, residues 36-129 (QTESTLKIRP…VFRSNQQNLG (94 aa)) are periplasmic.

Belongs to the MzrA family. As to quaternary structure, interacts with EnvZ.

The protein resides in the cell inner membrane. In terms of biological role, modulates the activity of the EnvZ/OmpR two-component regulatory system, probably by directly modulating EnvZ enzymatic activity and increasing stability of phosphorylated OmpR. The sequence is that of Modulator protein MzrA from Yersinia pestis (strain Pestoides F).